A 906-amino-acid polypeptide reads, in one-letter code: Alanine--tRNA ligase, chloroplastic/mitochondrial (906 aa).

Positions 1–10 (MSAATERERL) are enriched in basic and acidic residues. The disordered stretch occupies residues 1 to 22 (MSAATERERLTNANPNARGKDN). Zn(2+) is bound by residues histidine 589, histidine 593, cysteine 691, and histidine 695.

It belongs to the class-II aminoacyl-tRNA synthetase family. In terms of assembly, monomer. The cofactor is Zn(2+).

It localises to the plastid. Its subcellular location is the chloroplast. The protein resides in the mitochondrion. The enzyme catalyses tRNA(Ala) + L-alanine + ATP = L-alanyl-tRNA(Ala) + AMP + diphosphate. Catalyzes the attachment of alanine to tRNA(Ala) in a two-step reaction: alanine is first activated by ATP to form Ala-AMP and then transferred to the acceptor end of tRNA(Ala). Also edits incorrectly charged tRNA(Ala) via its editing domain. The protein is Alanine--tRNA ligase, chloroplastic/mitochondrial of Ostreococcus lucimarinus (strain CCE9901).